We begin with the raw amino-acid sequence, 66 residues long: Stress-associated endoplasmic reticulum protein 1 (66 aa).

The tract at residues 1–33 (MVAKQRIRMANEKHSKNITQRGNVAKTSRNAPG) is disordered. At 1–38 (MVAKQRIRMANEKHSKNITQRGNVAKTSRNAPGEKASV) the chain is on the cytoplasmic side. Polar residues predominate over residues 17–30 (NITQRGNVAKTSRN). Residues 39–59 (GPWLLALFIFVVCGSAIFQII) traverse the membrane as a helical segment. Topologically, residues 60–66 (QSIRMGM) are extracellular.

It belongs to the RAMP4 family. In terms of assembly, interacts with SEC61B, SEC61A1 and the SEC61 complex. Interacts with CANX.

It is found in the membrane. Its subcellular location is the endoplasmic reticulum membrane. Its function is as follows. Interacts with target proteins during their translocation into the lumen of the endoplasmic reticulum. Protects unfolded target proteins against degradation during ER stress. May facilitate glycosylation of target proteins after termination of ER stress. May modulate the use of N-glycosylation sites on target proteins. This is Stress-associated endoplasmic reticulum protein 1 (SERP1) from Pongo abelii (Sumatran orangutan).